Reading from the N-terminus, the 208-residue chain is Large ribosomal subunit protein uL4 (208 aa).

Positions 44-79 are disordered; sequence QRQGTHKSKERSEISGSTRKLGRQKGGGGARRGDIN.

Belongs to the universal ribosomal protein uL4 family. As to quaternary structure, part of the 50S ribosomal subunit.

One of the primary rRNA binding proteins, this protein initially binds near the 5'-end of the 23S rRNA. It is important during the early stages of 50S assembly. It makes multiple contacts with different domains of the 23S rRNA in the assembled 50S subunit and ribosome. Its function is as follows. Forms part of the polypeptide exit tunnel. This is Large ribosomal subunit protein uL4 from Phocaeicola vulgatus (strain ATCC 8482 / DSM 1447 / JCM 5826 / CCUG 4940 / NBRC 14291 / NCTC 11154) (Bacteroides vulgatus).